The following is a 290-amino-acid chain: Inner membrane protein YebZ (290 aa).

Residues 1 to 10 (MLAFTWIALR) lie on the Periplasmic side of the membrane. A helical membrane pass occupies residues 11 to 31 (FIHFTSLMLVFGFAMYGAWLA). Residues 32–49 (PLTIRRLLAKRFLRLQQH) are Cytoplasmic-facing. A helical membrane pass occupies residues 50–70 (AAVWSLISATAMLAVQGGLMG). The Periplasmic portion of the chain corresponds to 71-89 (TGWTDVFSPNIWQAVLQTQ). A helical membrane pass occupies residues 90–110 (FGGIWLWQIVLALVTLIVALM). Topologically, residues 111–117 (QPRNMPR) are cytoplasmic. Residues 118–138 (LLFMLTTAQFILLAGVGHATL) traverse the membrane as a helical segment. Topologically, residues 139-151 (NEGVTAKIHQTNH) are periplasmic. A helical membrane pass occupies residues 152 to 172 (AIHLICAAAWFGGLLPVLWCM). Topologically, residues 173–195 (QLIKGRWRHQAIQALMRFSWCGH) are cytoplasmic. A helical membrane pass occupies residues 196–216 (FAVIGVLASGVLNALLITGFP). Residues 217 to 222 (PTLTTY) are Periplasmic-facing. A helical transmembrane segment spans residues 223-243 (WGQLLLLKAILVMIMVVIALA). The Cytoplasmic segment spans residues 244-260 (NRYVLVPRMRQDEDRAA). The chain crosses the membrane as a helical span at residues 261 to 281 (PWFVWMTKLEWAIGAVVLVII). Residues 282-290 (SLLATLEPF) are Periplasmic-facing.

The protein belongs to the CopD family.

Its subcellular location is the cell inner membrane. The protein is Inner membrane protein YebZ (yebZ) of Escherichia coli (strain K12).